Consider the following 414-residue polypeptide: 5-aminolevulinate synthase (414 aa).

Substrate is bound by residues Arg-22, Ser-133, and Lys-152. Pyridoxal 5'-phosphate contacts are provided by Ser-185, His-213, and Thr-241. Residue Lys-244 is part of the active site. Residue Lys-244 is modified to N6-(pyridoxal phosphate)lysine. Residues Thr-273 and Thr-274 each coordinate pyridoxal 5'-phosphate. Thr-359 lines the substrate pocket.

The protein belongs to the class-II pyridoxal-phosphate-dependent aminotransferase family. Homodimer. Pyridoxal 5'-phosphate is required as a cofactor.

It catalyses the reaction succinyl-CoA + glycine + H(+) = 5-aminolevulinate + CO2 + CoA. It functions in the pathway porphyrin-containing compound metabolism; protoporphyrin-IX biosynthesis; 5-aminolevulinate from glycine: step 1/1. The chain is 5-aminolevulinate synthase (hemA) from Rickettsia felis (strain ATCC VR-1525 / URRWXCal2) (Rickettsia azadi).